Reading from the N-terminus, the 405-residue chain is Acetate kinase (405 aa).

Asn7 contacts Mg(2+). An ATP-binding site is contributed by Lys14. Arg99 provides a ligand contact to substrate. Residue Asp156 is the Proton donor/acceptor of the active site. ATP-binding positions include 215–219, 290–292, and 338–342; these read HLGNG, DMR, and GVGEH. Glu391 lines the Mg(2+) pocket.

This sequence belongs to the acetokinase family. In terms of assembly, homodimer. It depends on Mg(2+) as a cofactor. The cofactor is Mn(2+).

The protein resides in the cytoplasm. The enzyme catalyses acetate + ATP = acetyl phosphate + ADP. Its pathway is metabolic intermediate biosynthesis; acetyl-CoA biosynthesis; acetyl-CoA from acetate: step 1/2. Functionally, catalyzes the formation of acetyl phosphate from acetate and ATP. Can also catalyze the reverse reaction. The polypeptide is Acetate kinase (Nostoc punctiforme (strain ATCC 29133 / PCC 73102)).